The following is a 156-amino-acid chain: Small ribosomal subunit protein uS7 (156 aa).

Belongs to the universal ribosomal protein uS7 family. Part of the 30S ribosomal subunit. Contacts proteins S9 and S11.

In terms of biological role, one of the primary rRNA binding proteins, it binds directly to 16S rRNA where it nucleates assembly of the head domain of the 30S subunit. Is located at the subunit interface close to the decoding center, probably blocks exit of the E-site tRNA. This is Small ribosomal subunit protein uS7 from Nitrosomonas europaea (strain ATCC 19718 / CIP 103999 / KCTC 2705 / NBRC 14298).